Consider the following 221-residue polypeptide: NADH-ubiquinone oxidoreductase chain 6 (221 aa).

The next 5 helical transmembrane spans lie at 18–38 (FVEYILDIFSIMAFLTGIYVI), 44–64 (IVSVLFLILLFGGISSYLNII), 74–94 (IIVYIGAVSILFLFILMLINI), 107–127 (IPLTIFIGIIFSNFLFPMLPY), and 195–215 (IWLIIASFILLLAMVGSIVIT).

It belongs to the complex I subunit 6 family.

It is found in the mitochondrion membrane. The enzyme catalyses a ubiquinone + NADH + 5 H(+)(in) = a ubiquinol + NAD(+) + 4 H(+)(out). Functionally, core subunit of the mitochondrial membrane respiratory chain NADH dehydrogenase (Complex I) that is believed to belong to the minimal assembly required for catalysis. Complex I functions in the transfer of electrons from NADH to the respiratory chain. The immediate electron acceptor for the enzyme is believed to be ubiquinone. The sequence is that of NADH-ubiquinone oxidoreductase chain 6 (ND6) from Podospora anserina (strain S / ATCC MYA-4624 / DSM 980 / FGSC 10383) (Pleurage anserina).